A 219-amino-acid chain; its full sequence is Melanoma-associated antigen H1 (219 aa).

Positions 1-13 (MPRGRKSRRRRNA) are enriched in basic residues. Positions 1–84 (MPRGRKSRRR…QKPSVPRSNF (84 aa)) are disordered. An MAGE domain is found at 1–198 (MPRGRKSRRR…KDWPCNYDWD (198 aa)). Residues 44 to 57 (PEDDLSGPEEDPST) show a composition bias toward acidic residues. A compositionally biased stretch (low complexity) spans 58 to 74 (PEEASTTPEEASSTAQA). Tyrosine 195 is modified (phosphotyrosine).

This chain is Melanoma-associated antigen H1 (MAGEH1), found in Homo sapiens (Human).